The primary structure comprises 79 residues: MDVKETILNIIQELFMEDVSEMMDEDLLHAGVLDSMGTVELIVELESRFNITVPVSEFGREDWNTANKIISGVVELMHA.

The region spanning 1 to 77 (MDVKETILNI…KIISGVVELM (77 aa)) is the Carrier domain. S35 is modified (O-(pantetheine 4'-phosphoryl)serine).

It belongs to the DltC family. 4'-phosphopantetheine is transferred from CoA to a specific serine of apo-DCP.

The protein localises to the cytoplasm. The protein operates within cell wall biogenesis; lipoteichoic acid biosynthesis. Carrier protein involved in the D-alanylation of lipoteichoic acid (LTA). The loading of thioester-linked D-alanine onto DltC is catalyzed by D-alanine--D-alanyl carrier protein ligase DltA. The DltC-carried D-alanyl group is further transferred to cell membrane phosphatidylglycerol (PG) by forming an ester bond, probably catalyzed by DltD. D-alanylation of LTA plays an important role in modulating the properties of the cell wall in Gram-positive bacteria, influencing the net charge of the cell wall. The protein is D-alanyl carrier protein of Streptococcus suis (strain 98HAH33).